Consider the following 117-residue polypeptide: Photosystem II reaction center Psb28 protein (117 aa).

This sequence belongs to the Psb28 family. Part of the photosystem II complex.

It is found in the cellular thylakoid membrane. This chain is Photosystem II reaction center Psb28 protein, found in Prochlorococcus marinus (strain MIT 9215).